A 661-amino-acid chain; its full sequence is Meiotic coiled-coil protein 1 (661 aa).

Coiled coils occupy residues 38 to 78 (LDAL…IIEE), 100 to 121 (RAIY…ERLS), 143 to 184 (DIKL…LSIK), 304 to 320 (ELIQ…EVDL), and 360 to 387 (LKRL…DNEK). Disordered stretches follow at residues 410-446 (QNQE…LRNI), 467-562 (LIDR…TPAS), and 573-592 (LSRT…TPTQ). Low complexity predominate over residues 414–430 (NISSNDNSKSSPESSPP). The segment covering 436–445 (GKIENKKLRN) has biased composition (basic and acidic residues). Polar residues-rich tracts occupy residues 472-481 (VNQSPDTRSV), 548-562 (HNSV…TPAS), and 582-592 (FTNSLDDTPTQ).

The protein is Meiotic coiled-coil protein 1 (mcp1) of Schizosaccharomyces pombe (strain 972 / ATCC 24843) (Fission yeast).